Consider the following 419-residue polypeptide: Coiled-coil domain-containing protein 85C (419 aa).

Ala-2 is subject to N-acetylalanine. 2 coiled-coil regions span residues 22-88 (ELLR…RELC) and 118-159 (HEVA…AALA). 2 disordered regions span residues 162-268 (GAAS…DPSS) and 307-348 (HSES…AGQK). Gly residues predominate over residues 164–175 (ASGGGGGGGGAG). Low complexity predominate over residues 176–189 (SRSSIDSQASLSGP). Ser-178 carries the phosphoserine modification. Pro residues predominate over residues 224–233 (PPPLLPPGPH). Ser-246 is modified (phosphoserine). The span at 307–325 (HSESQLASLPPSYQDSLQN) shows a compositional bias: polar residues. Over residues 329-338 (CPAPELPSPP) the composition is skewed to pro residues.

Belongs to the CCDC85 family. As to quaternary structure, may interact with ARVCF, CTNND1, CTNND2 and PKP4.

The protein localises to the cell junction. It localises to the tight junction. It is found in the adherens junction. In terms of biological role, may play a role in cell-cell adhesion and epithelium development through its interaction with proteins of the beta-catenin family. May play an important role in cortical development, especially in the maintenance of radial glia. The polypeptide is Coiled-coil domain-containing protein 85C (CCDC85C) (Homo sapiens (Human)).